A 438-amino-acid polypeptide reads, in one-letter code: UDP-N-acetylmuramoylalanine--D-glutamate ligase (438 aa).

112-118 contributes to the ATP binding site; sequence GSNGKST.

This sequence belongs to the MurCDEF family.

It localises to the cytoplasm. The enzyme catalyses UDP-N-acetyl-alpha-D-muramoyl-L-alanine + D-glutamate + ATP = UDP-N-acetyl-alpha-D-muramoyl-L-alanyl-D-glutamate + ADP + phosphate + H(+). Its pathway is cell wall biogenesis; peptidoglycan biosynthesis. In terms of biological role, cell wall formation. Catalyzes the addition of glutamate to the nucleotide precursor UDP-N-acetylmuramoyl-L-alanine (UMA). The protein is UDP-N-acetylmuramoylalanine--D-glutamate ligase (murD) of Escherichia coli O6:H1 (strain CFT073 / ATCC 700928 / UPEC).